A 407-amino-acid chain; its full sequence is Phosphopentomutase (407 aa).

Residues Asp-10, Asp-306, His-311, Asp-347, His-348, and His-359 each coordinate Mn(2+).

Belongs to the phosphopentomutase family. Mn(2+) is required as a cofactor.

The protein localises to the cytoplasm. It carries out the reaction 2-deoxy-alpha-D-ribose 1-phosphate = 2-deoxy-D-ribose 5-phosphate. The enzyme catalyses alpha-D-ribose 1-phosphate = D-ribose 5-phosphate. Its pathway is carbohydrate degradation; 2-deoxy-D-ribose 1-phosphate degradation; D-glyceraldehyde 3-phosphate and acetaldehyde from 2-deoxy-alpha-D-ribose 1-phosphate: step 1/2. Isomerase that catalyzes the conversion of deoxy-ribose 1-phosphate (dRib-1-P) and ribose 1-phosphate (Rib-1-P) to deoxy-ribose 5-phosphate (dRib-5-P) and ribose 5-phosphate (Rib-5-P), respectively. The chain is Phosphopentomutase from Photorhabdus laumondii subsp. laumondii (strain DSM 15139 / CIP 105565 / TT01) (Photorhabdus luminescens subsp. laumondii).